The chain runs to 259 residues: UBX domain-containing protein 2A (259 aa).

A required for interaction with CHRNA3 region spans residues 1-151 (MKDVDNLKSI…SATPKIVSKA (151 aa)). Positions 1–164 (MKDVDNLKSI…EVENKNNLSA (164 aa)) are required for inhibition of CHRNA3 ubiquitination and translocation of CHRNA3 to the plasma membrane resulting in an increase in acetylcholine-gated nicotinic acetylcholine receptor currents. The 65-residue stretch at 60-124 (QVDVNIKLWK…VEDKKNEICL (65 aa)) folds into the SEP domain. The required for interaction with VCP stretch occupies residues 167-259 (LNNLEPITNI…TASFRELSEH (93 aa)). A UBX domain is found at 169–246 (NLEPITNIQI…DLQNAVIIQR (78 aa)).

Part of a complex composed of STUB1/CHIP, VCP/p97, CHRNA3, and UBXN2A that modulates the ubiquitination and endoplasmic reticulum-associated degradation (ERAD) of CHRNA3. Within the complex UBXN2A acts as a scaffold protein required for the interaction of CHRNA3 with VCP/p97, this interaction also inhibits CHRNA3 ubiquitination by STUB1/CHIP and subsequently ERAD. Interacts (via SEP domain) with CHRNA3 and interacts (via UBX domain) with VCP/P97; these interactions are required for the interaction of CHRNA3 with the STUB1-VCP-UBXN2A complex. Interacts with HSPA9/MOT-2 (via SBD domain); the interaction inhibits HSPA9/MOT-2 interaction with and degradation of p53, thereby promotes p53 translocation to the nucleus. Interacts with RICTOR. Ubiquitinated. Expressed in the colon (at protein level).

Its subcellular location is the golgi apparatus. It localises to the endoplasmic reticulum. The protein resides in the perikaryon. It is found in the cell projection. The protein localises to the dendrite. Its subcellular location is the nucleus. It localises to the cytoplasm. Its function is as follows. Acts to repress the ubiquitination and subsequent endoplasmic reticulum-associated degradation of CHRNA3 by the STUB1-VCP-UBXN2A complex in cortical neurons. Also acts to promote the translocation of CHRNA3 to the plasma membrane and subsequently increases plasma membrane acetylcholine-gated ion-channel activation. Plays a role in the inhibition of STUB1-mediated TP53 degradation, via its interaction with HSPA9 which acts to inhibit TP53 binding to HSPA9. Positively mediates the ubiquitination and proteosomal degradation of RICTOR, may thereby act as a negative regulator of the mTORC2 pathway. This is UBX domain-containing protein 2A from Homo sapiens (Human).